The primary structure comprises 913 residues: Protein translocase subunit SecA (913 aa).

ATP-binding positions include glutamine 87, 105–109 (GEGKT), and aspartate 517. Disordered regions lie at residues 568–588 (ESRRIDNQLRGRSGRQGDPGS) and 871–913 (EVAV…GKLS). Cysteine 897, cysteine 899, cysteine 908, and histidine 909 together coordinate Zn(2+). Over residues 903-913 (KKYKQCHGKLS) the composition is skewed to basic residues.

This sequence belongs to the SecA family. Monomer and homodimer. Part of the essential Sec protein translocation apparatus which comprises SecA, SecYEG and auxiliary proteins SecDF-YajC and YidC. The cofactor is Zn(2+).

It is found in the cell inner membrane. The protein resides in the cytoplasm. The catalysed reaction is ATP + H2O + cellular proteinSide 1 = ADP + phosphate + cellular proteinSide 2.. Functionally, part of the Sec protein translocase complex. Interacts with the SecYEG preprotein conducting channel. Has a central role in coupling the hydrolysis of ATP to the transfer of proteins into and across the cell membrane, serving both as a receptor for the preprotein-SecB complex and as an ATP-driven molecular motor driving the stepwise translocation of polypeptide chains across the membrane. The polypeptide is Protein translocase subunit SecA (Coxiella burnetii (strain RSA 493 / Nine Mile phase I)).